Consider the following 142-residue polypeptide: Large ribosomal subunit protein bL17 (142 aa).

This sequence belongs to the bacterial ribosomal protein bL17 family. Part of the 50S ribosomal subunit. Contacts protein L32.

This chain is Large ribosomal subunit protein bL17, found in Chlamydia abortus (strain DSM 27085 / S26/3) (Chlamydophila abortus).